Consider the following 314-residue polypeptide: D-alanine--D-alanine ligase (314 aa).

The ATP-grasp domain maps to 114–309 (KQLWRAHGLP…FDALVLRILD (196 aa)). 140 to 195 (IEALGLPLIVKPVHEGSTIGISIVETRDALIAAHAEASRFDSAIMAERFVQGEEYT) provides a ligand contact to ATP. Mg(2+) is bound by residues Asp-263, Glu-276, and Asn-278.

Belongs to the D-alanine--D-alanine ligase family. It depends on Mg(2+) as a cofactor. Mn(2+) is required as a cofactor.

It is found in the cytoplasm. It carries out the reaction 2 D-alanine + ATP = D-alanyl-D-alanine + ADP + phosphate + H(+). The protein operates within cell wall biogenesis; peptidoglycan biosynthesis. Cell wall formation. In Chromohalobacter salexigens (strain ATCC BAA-138 / DSM 3043 / CIP 106854 / NCIMB 13768 / 1H11), this protein is D-alanine--D-alanine ligase.